The following is a 234-amino-acid chain: Putative B3 domain-containing protein At2g18810 (234 aa).

The disordered stretch occupies residues 55 to 88 (CKNQDPEQNPNRVASSPSLCHVKSKRPQKGVSNK). Residues 60–72 (PEQNPNRVASSPS) show a composition bias toward polar residues. The TF-B3 DNA-binding region spans 87 to 185 (NKPILDMDFL…MLFFALVLSD (99 aa)).

The protein resides in the nucleus. The sequence is that of Putative B3 domain-containing protein At2g18810 from Arabidopsis thaliana (Mouse-ear cress).